The following is a 420-amino-acid chain: Putative phosphate permease HI_1604 (420 aa).

12 helical membrane passes run 8-28 (GSWL…GIGA), 49-69 (AIII…GEVT), 88-108 (ILAL…FIAT), 112-132 (WPVS…CITI), 145-165 (IVGS…AIFA), 185-205 (GPYY…KKGL), 216-236 (ETLI…HFYF), 250-270 (FGAV…AMAF), 300-320 (GGAL…VGLI), 343-363 (FAAQ…GLPI), 370-390 (VGAI…LTVI), and 393-413 (IISS…IIFY).

This sequence belongs to the inorganic phosphate transporter (PiT) (TC 2.A.20) family.

It is found in the cell inner membrane. In terms of biological role, potential transporter for phosphate. The polypeptide is Putative phosphate permease HI_1604 (Haemophilus influenzae (strain ATCC 51907 / DSM 11121 / KW20 / Rd)).